The chain runs to 477 residues: Proline--tRNA ligase (477 aa).

This sequence belongs to the class-II aminoacyl-tRNA synthetase family. ProS type 3 subfamily. As to quaternary structure, homodimer.

Its subcellular location is the cytoplasm. It carries out the reaction tRNA(Pro) + L-proline + ATP = L-prolyl-tRNA(Pro) + AMP + diphosphate. In terms of biological role, catalyzes the attachment of proline to tRNA(Pro) in a two-step reaction: proline is first activated by ATP to form Pro-AMP and then transferred to the acceptor end of tRNA(Pro). The chain is Proline--tRNA ligase from Methanoculleus marisnigri (strain ATCC 35101 / DSM 1498 / JR1).